A 466-amino-acid polypeptide reads, in one-letter code: 3-isopropylmalate dehydratase large subunit (466 aa).

3 residues coordinate [4Fe-4S] cluster: cysteine 347, cysteine 407, and cysteine 410.

Belongs to the aconitase/IPM isomerase family. LeuC type 1 subfamily. Heterodimer of LeuC and LeuD. The cofactor is [4Fe-4S] cluster.

It catalyses the reaction (2R,3S)-3-isopropylmalate = (2S)-2-isopropylmalate. It participates in amino-acid biosynthesis; L-leucine biosynthesis; L-leucine from 3-methyl-2-oxobutanoate: step 2/4. Its function is as follows. Catalyzes the isomerization between 2-isopropylmalate and 3-isopropylmalate, via the formation of 2-isopropylmaleate. The chain is 3-isopropylmalate dehydratase large subunit from Shewanella halifaxensis (strain HAW-EB4).